A 336-amino-acid polypeptide reads, in one-letter code: Dihydroorotate dehydrogenase (quinone) (336 aa).

Residues 62–66 (AGLDK) and Thr-86 contribute to the FMN site. Substrate is bound at residue Lys-66. 111 to 115 (NRFGF) contacts substrate. 2 residues coordinate FMN: Asn-139 and Asn-172. A substrate-binding site is contributed by Asn-172. Ser-175 functions as the Nucleophile in the catalytic mechanism. Residue Asn-177 coordinates substrate. 2 residues coordinate FMN: Lys-217 and Thr-245. Position 246–247 (246–247 (NT)) interacts with substrate. Residues Gly-268, Gly-297, and 318-319 (YS) each bind FMN.

This sequence belongs to the dihydroorotate dehydrogenase family. Type 2 subfamily. Monomer. The cofactor is FMN.

It is found in the cell membrane. It carries out the reaction (S)-dihydroorotate + a quinone = orotate + a quinol. Its pathway is pyrimidine metabolism; UMP biosynthesis via de novo pathway; orotate from (S)-dihydroorotate (quinone route): step 1/1. In terms of biological role, catalyzes the conversion of dihydroorotate to orotate with quinone as electron acceptor. This is Dihydroorotate dehydrogenase (quinone) from Photobacterium profundum (strain SS9).